The sequence spans 278 residues: Malonyl-[acyl-carrier protein] O-methyltransferase (278 aa).

Belongs to the methyltransferase superfamily.

It carries out the reaction malonyl-[ACP] + S-adenosyl-L-methionine = malonyl-[ACP] methyl ester + S-adenosyl-L-homocysteine. Its pathway is cofactor biosynthesis; biotin biosynthesis. Functionally, converts the free carboxyl group of a malonyl-thioester to its methyl ester by transfer of a methyl group from S-adenosyl-L-methionine (SAM). It allows to synthesize pimeloyl-ACP via the fatty acid synthetic pathway. The chain is Malonyl-[acyl-carrier protein] O-methyltransferase from Brevibacillus brevis (strain 47 / JCM 6285 / NBRC 100599).